Reading from the N-terminus, the 393-residue chain is Pyrimidine monooxygenase RutA (393 aa).

Residues isoleucine 79–lysine 80, asparagine 145, glutamate 154, arginine 170–tyrosine 171, and serine 220 each bind FMN.

It belongs to the NtaA/SnaA/DszA monooxygenase family. RutA subfamily.

The catalysed reaction is uracil + FMNH2 + NADH + O2 = (Z)-3-ureidoacrylate + FMN + NAD(+) + H2O + H(+). It carries out the reaction thymine + FMNH2 + NADH + O2 = (Z)-2-methylureidoacrylate + FMN + NAD(+) + H2O + H(+). Functionally, catalyzes the pyrimidine ring opening between N-3 and C-4 by an unusual flavin hydroperoxide-catalyzed mechanism, adding oxygen atoms in the process to yield ureidoacrylate peracid, that immediately reacts with FMN forming ureidoacrylate and FMN-N(5)-oxide. The FMN-N(5)-oxide reacts spontaneously with NADH to produce FMN. Requires the flavin reductase RutF to regenerate FMN in vivo. This chain is Pyrimidine monooxygenase RutA, found in Escherichia coli O6:H1 (strain CFT073 / ATCC 700928 / UPEC).